The chain runs to 86 residues: MAHKKAGGSSRNGRDSEGRRLGVKKYGGENVIPGNILVRQRGTKMWPGVGVGMGKDHTLFALEEGRVAFTMRRNRQYVNVEVAAAQ.

Residues 1-24 (MAHKKAGGSSRNGRDSEGRRLGVK) are disordered.

This sequence belongs to the bacterial ribosomal protein bL27 family.

In Magnetococcus marinus (strain ATCC BAA-1437 / JCM 17883 / MC-1), this protein is Large ribosomal subunit protein bL27.